A 377-amino-acid polypeptide reads, in one-letter code: Succinyl-diaminopimelate desuccinylase (377 aa).

A Zn(2+)-binding site is contributed by H66. Residue D68 is part of the active site. D99 lines the Zn(2+) pocket. The active-site Proton acceptor is E133. Residues E134, E162, and H348 each contribute to the Zn(2+) site.

It belongs to the peptidase M20A family. DapE subfamily. Homodimer. Zn(2+) serves as cofactor. The cofactor is Co(2+).

The enzyme catalyses N-succinyl-(2S,6S)-2,6-diaminopimelate + H2O = (2S,6S)-2,6-diaminopimelate + succinate. It participates in amino-acid biosynthesis; L-lysine biosynthesis via DAP pathway; LL-2,6-diaminopimelate from (S)-tetrahydrodipicolinate (succinylase route): step 3/3. In terms of biological role, catalyzes the hydrolysis of N-succinyl-L,L-diaminopimelic acid (SDAP), forming succinate and LL-2,6-diaminopimelate (DAP), an intermediate involved in the bacterial biosynthesis of lysine and meso-diaminopimelic acid, an essential component of bacterial cell walls. The polypeptide is Succinyl-diaminopimelate desuccinylase (Alcanivorax borkumensis (strain ATCC 700651 / DSM 11573 / NCIMB 13689 / SK2)).